A 283-amino-acid chain; its full sequence is ATP synthase gamma chain (283 aa).

Belongs to the ATPase gamma chain family. F-type ATPases have 2 components, CF(1) - the catalytic core - and CF(0) - the membrane proton channel. CF(1) has five subunits: alpha(3), beta(3), gamma(1), delta(1), epsilon(1). CF(0) has three main subunits: a, b and c.

Its subcellular location is the cell membrane. Its function is as follows. Produces ATP from ADP in the presence of a proton gradient across the membrane. The gamma chain is believed to be important in regulating ATPase activity and the flow of protons through the CF(0) complex. The polypeptide is ATP synthase gamma chain (Clostridium botulinum (strain Eklund 17B / Type B)).